Here is a 466-residue protein sequence, read N- to C-terminus: Aladin (466 aa).

5 WD repeats span residues Trp135–Thr174, Pro179–Arg218, Pro229–Leu269, Arg271–Arg310, and Leu378–Gln418.

The protein localises to the nucleus. The protein resides in the nuclear pore complex. It localises to the cytoplasm. It is found in the cytoskeleton. Its subcellular location is the spindle. Functionally, involved in mitotic spindle assembly. The protein is Aladin of Drosophila melanogaster (Fruit fly).